Here is a 1392-residue protein sequence, read N- to C-terminus: Leucine-rich PPR motif-containing protein, mitochondrial (1392 aa).

A mitochondrion-targeting transit peptide spans 1-59 (MAALLRPARWLLGAAAAPRLPLSLRLPAGVPGRLSSVVRVAAVGSRPAAGERLSQARLY). PPR repeat units follow at residues 125–159 (LLRS…GVVY), 160–194 (DVSH…NIQP), 195–229 (NRVT…DLPI), 230–264 (TEAV…GIEP), 265–299 (GPDT…DHYF), 300–334 (MDRD…RRSI), 402–436 (HSSS…GFPI), 437–471 (RPHY…GVDP), 677–708 (VGSA…ESDM), 709–745 (VIGG…SAIL), 746–783 (DTAK…IKDA), 784–820 (TVLS…AKPS), 821–856 (SNIS…VLPR), and 953–987 (RDQM…NIIP). K151, K186, and K225 each carry N6-acetyllysine. K291 carries the N6-acetyllysine modification. K462 carries the N6-acetyllysine modification. N6-acetyllysine is present on K749. The RNA-binding stretch occupies residues 931–1050 (ASNQVEALEK…NCKLKKSKDA (120 aa)). Phosphoserine occurs at positions 1025, 1026, and 1028. PPR repeat units follow at residues 1030–1064 (GEDV…NVVF), 1065–1101 (SSET…GFTL), 1102–1136 (NDAA…KQVP), 1137–1175 (SQIA…LSKM), 1176–1210 (VFIN…QAIE), and 1315–1349 (NDKV…NLKL). At S1137 the chain carries Phosphoserine.

In terms of assembly, component of mRNP complexes associated with HNRPA1. Component of the complex, at least composed of LRPPRC, BECN1 and BCL2; the interactions prevent BECN1 from forming an autophagy-inducing complex with PIK3C3. Interacts with CECR2, HEBP2, MAP1S and UXT. Interacts with PPARGC1A. Interacts with FOXO1. Interacts (via N-terminus) with EIF4E; the interaction promotes association of EIF4E with 4ESE-containing mRNAs. Interacts with exportin XPO1/CRM1; interacts both alone and in complex with EIF4E and 4ESE-containing mRNAs to form an EIF4E-dependent mRNA export complex. Interacts with importin IPO8; the interaction occurs when LRPPRC is in its RNA-free form and returns LRPPRC to the nucleus for further export rounds. Interacts with BECN1. In terms of tissue distribution, strongly expressed in heart, liver and kidney. Weakly expressed in brain, skeletal muscle and testes.

It localises to the mitochondrion. The protein localises to the nucleus. It is found in the nucleoplasm. The protein resides in the nucleus inner membrane. Its subcellular location is the nucleus outer membrane. In terms of biological role, may play a role in RNA metabolism in both nuclei and mitochondria. In the nucleus binds to HNRPA1-associated poly(A) mRNAs and is part of nmRNP complexes at late stages of mRNA maturation which are possibly associated with nuclear mRNA export. Positively modulates nuclear export of mRNAs containing the EIF4E sensitivity element (4ESE) by binding simultaneously to both EIF4E and the 4ESE and acting as a platform for assembly for the RNA export complex. Also binds to exportin XPO1/CRM1 to engage the nuclear pore and traffic the bound mRNAs to the cytoplasm. May bind mature mRNA in the nucleus outer membrane. In mitochondria binds to poly(A) mRNA. Plays a role in translation or stability of mitochondrially encoded cytochrome c oxidase (COX) subunits. May be involved in transcription regulation. Cooperates with PPARGC1A to regulate certain mitochondrially encoded genes and gluconeogenic genes and may regulate docking of PPARGC1A to transcription factors. Seems to be involved in the transcription regulation of the multidrug-related genes MDR1 and MVP. Part of a nuclear factor that binds to the invMED1 element of MDR1 and MVP gene promoters. Binds single-stranded DNA. Required for maintaining mitochondrial potential. Suppresses the initiation of basal levels of autophagy and mitophagy by sustaining BCL2 levels. The protein is Leucine-rich PPR motif-containing protein, mitochondrial (Lrpprc) of Mus musculus (Mouse).